Consider the following 421-residue polypeptide: 4-hydroxy-3-methylbut-2-en-1-yl diphosphate synthase (flavodoxin) (421 aa).

Positions 298, 301, 344, and 351 each coordinate [4Fe-4S] cluster.

This sequence belongs to the IspG family. [4Fe-4S] cluster serves as cofactor.

The catalysed reaction is (2E)-4-hydroxy-3-methylbut-2-enyl diphosphate + oxidized [flavodoxin] + H2O + 2 H(+) = 2-C-methyl-D-erythritol 2,4-cyclic diphosphate + reduced [flavodoxin]. Its pathway is isoprenoid biosynthesis; isopentenyl diphosphate biosynthesis via DXP pathway; isopentenyl diphosphate from 1-deoxy-D-xylulose 5-phosphate: step 5/6. Its function is as follows. Converts 2C-methyl-D-erythritol 2,4-cyclodiphosphate (ME-2,4cPP) into 1-hydroxy-2-methyl-2-(E)-butenyl 4-diphosphate. The chain is 4-hydroxy-3-methylbut-2-en-1-yl diphosphate synthase (flavodoxin) from Neisseria meningitidis serogroup C / serotype 2a (strain ATCC 700532 / DSM 15464 / FAM18).